A 282-amino-acid chain; its full sequence is Undecaprenyl-diphosphatase (282 aa).

A run of 8 helical transmembrane segments spans residues Val7–Ile29, Phe45–Trp65, Gly89–Lys109, Leu115–Ile135, Leu153–Leu173, Phe196–Leu216, Thr229–Met249, and Trp258–Ile278.

Belongs to the UppP family.

The protein localises to the cell inner membrane. It catalyses the reaction di-trans,octa-cis-undecaprenyl diphosphate + H2O = di-trans,octa-cis-undecaprenyl phosphate + phosphate + H(+). Catalyzes the dephosphorylation of undecaprenyl diphosphate (UPP). Confers resistance to bacitracin. The polypeptide is Undecaprenyl-diphosphatase (Acidiphilium cryptum (strain JF-5)).